A 222-amino-acid chain; its full sequence is Germin-like protein subfamily 1 member 16 (222 aa).

The N-terminal stretch at 1–22 (MRVSQSLIPFAIIALVLSFVNA) is a signal peptide. Cysteines 32 and 48 form a disulfide. The Cupin type-1 domain maps to 62–213 (SGLNVPGNTN…AFQLDANVVK (152 aa)). N-linked (GlcNAc...) asparagine glycosylation is present at N77. 4 residues coordinate Mn(2+): H110, H112, E117, and H159.

It belongs to the germin family. Oligomer (believed to be a pentamer but probably hexamer).

Its subcellular location is the secreted. It localises to the extracellular space. The protein resides in the apoplast. In terms of biological role, may play a role in plant defense. Probably has no oxalate oxidase activity even if the active site is conserved. The chain is Germin-like protein subfamily 1 member 16 from Arabidopsis thaliana (Mouse-ear cress).